The primary structure comprises 50 residues: Protein PndA (50 aa).

The helical transmembrane segment at 5–25 (TFLMMLIVICVTILCFVWMVR) threads the bilayer.

The protein belongs to the Hok/Gef family.

The protein localises to the cell inner membrane. In terms of biological role, toxic component of a type I toxin-antitoxin (TA) system. When expressed is involved in cellular Mg(2+) release and degradation of stable RNA. The protein is Protein PndA (pndA) of Escherichia coli.